A 239-amino-acid chain; its full sequence is Immunoglobulin superfamily member 23 (239 aa).

The tract at residues 63-93 (ELEAQPPTSSSPKGLPGRPRTSQEVPNAEDN) is disordered. An Ig-like domain is found at 94–179 (PSLIPLVTFP…ELVSEPVTVS (86 aa)). The helical transmembrane segment at 214–234 (LIVAATIGGLVLIGSVCFYIL) threads the bilayer.

The protein localises to the cell membrane. Its function is as follows. May be involved in osteoclast differentiation. The protein is Immunoglobulin superfamily member 23 of Mus musculus (Mouse).